The sequence spans 774 residues: Fe(3+) dicitrate transport protein FecA (774 aa).

Positions 1–33 (MTPLRVFRKTTPLVNTIRLSLLPLAGLSFSAFA) are cleaved as a signal peptide. The short motif at 56 to 63 (FTLSVDAS) is the TonB box element. One can recognise a TBDR plug domain in the interval 129 to 250 (DVFEHAGARD…VGGVVNFVTR (122 aa)). One can recognise a TBDR beta-barrel domain in the interval 255–774 (DFGIEAGVEG…TLYMQGSLKF (520 aa)). The short motif at 757 to 774 (GIYAGQPRTLYMQGSLKF) is the TonB C-terminal box element.

This sequence belongs to the TonB-dependent receptor family. As to quaternary structure, interacts (via periplasmic N-terminus) with FecR (via periplasmic C-terminus).

The protein resides in the cell outer membrane. Its function is as follows. FecA is the outer membrane receptor protein in the Fe(3+) dicitrate transport system. This chain is Fe(3+) dicitrate transport protein FecA (fecA), found in Escherichia coli (strain K12).